The chain runs to 270 residues: LIM zinc-binding domain-containing Nebulette (270 aa).

The LIM zinc-binding domain occupies proline 3–threonine 63. The stretch at serine 61–glycine 95 is one Nebulin 1 repeat. Arginine 96 carries the omega-N-methylarginine modification. A Nebulin 2 repeat occupies glycine 97–glycine 131. An Omega-N-methylarginine modification is found at arginine 132. The Nebulin 3 repeat unit spans residues glycine 133–lysine 159. Residue threonine 135 is modified to Phosphothreonine. Positions alanine 210 to asparagine 270 constitute an SH3 domain. Serine 230 is modified (phosphoserine).

The protein localises to the cytoplasm. Functionally, binds to actin and plays an important role in the assembly of the Z-disk. Isoform 2 might play a role in the assembly of focal adhesion. This chain is LIM zinc-binding domain-containing Nebulette (Nebl), found in Mus musculus (Mouse).